The following is an 880-amino-acid chain: Alanine--tRNA ligase (880 aa).

Zn(2+)-binding residues include H567, H571, C669, and H673.

It belongs to the class-II aminoacyl-tRNA synthetase family. Requires Zn(2+) as cofactor.

The protein localises to the cytoplasm. It catalyses the reaction tRNA(Ala) + L-alanine + ATP = L-alanyl-tRNA(Ala) + AMP + diphosphate. In terms of biological role, catalyzes the attachment of alanine to tRNA(Ala) in a two-step reaction: alanine is first activated by ATP to form Ala-AMP and then transferred to the acceptor end of tRNA(Ala). Also edits incorrectly charged Ser-tRNA(Ala) and Gly-tRNA(Ala) via its editing domain. The chain is Alanine--tRNA ligase from Bacillus thuringiensis subsp. konkukian (strain 97-27).